The following is a 48-amino-acid chain: Large ribosomal subunit protein eL40 (48 aa).

It belongs to the eukaryotic ribosomal protein eL40 family.

The chain is Large ribosomal subunit protein eL40 from Methanobrevibacter smithii (strain ATCC 35061 / DSM 861 / OCM 144 / PS).